A 176-amino-acid polypeptide reads, in one-letter code: Small ribosomal subunit protein uS5 (176 aa).

The 64-residue stretch at 11-74 (LSEVLVDVNR…QAAKKRMMKV (64 aa)) folds into the S5 DRBM domain.

This sequence belongs to the universal ribosomal protein uS5 family. As to quaternary structure, part of the 30S ribosomal subunit. Contacts proteins S4 and S8.

With S4 and S12 plays an important role in translational accuracy. In terms of biological role, located at the back of the 30S subunit body where it stabilizes the conformation of the head with respect to the body. This Rickettsia africae (strain ESF-5) protein is Small ribosomal subunit protein uS5.